Here is a 456-residue protein sequence, read N- to C-terminus: Phosphomethylpyrimidine synthase (456 aa).

Substrate is bound by residues Asn80, Met109, Tyr139, His175, 195 to 197, 236 to 239, and Glu275; these read SRG and DSLR. His279 serves as a coordination point for Zn(2+). Residue Tyr302 participates in substrate binding. His343 provides a ligand contact to Zn(2+). Residues Cys423, Cys426, and Cys431 each contribute to the [4Fe-4S] cluster site.

This sequence belongs to the ThiC family. Requires [4Fe-4S] cluster as cofactor.

The catalysed reaction is 5-amino-1-(5-phospho-beta-D-ribosyl)imidazole + S-adenosyl-L-methionine = 4-amino-2-methyl-5-(phosphooxymethyl)pyrimidine + CO + 5'-deoxyadenosine + formate + L-methionine + 3 H(+). The protein operates within cofactor biosynthesis; thiamine diphosphate biosynthesis. Catalyzes the synthesis of the hydroxymethylpyrimidine phosphate (HMP-P) moiety of thiamine from aminoimidazole ribotide (AIR) in a radical S-adenosyl-L-methionine (SAM)-dependent reaction. The sequence is that of Phosphomethylpyrimidine synthase from Prochlorococcus marinus (strain MIT 9515).